A 136-amino-acid chain; its full sequence is uncharacterized protein (136 aa).

The segment at arginine 74 to histidine 97 is disordered.

This is an uncharacterized protein from Saccharomyces cerevisiae (strain ATCC 204508 / S288c) (Baker's yeast).